The following is a 535-amino-acid chain: CTP synthase (535 aa).

An amidoligase domain region spans residues 1–267; sequence MTKYIFVTGG…DQIVCDHLKL (267 aa). Residue serine 13 coordinates CTP. Serine 13 lines the UTP pocket. ATP is bound at residue 14 to 19; that stretch reads SLGKGI. Position 54 (tyrosine 54) interacts with L-glutamine. Residue aspartate 71 coordinates ATP. Mg(2+) contacts are provided by aspartate 71 and glutamate 141. Residues 148–150, 188–193, and lysine 224 contribute to the CTP site; these read DIE and KTKPTQ. Residues 188-193 and lysine 224 each bind UTP; that span reads KTKPTQ. Residue 240-242 participates in ATP binding; it reads RDA. Residues 292–534 form the Glutamine amidotransferase type-1 domain; sequence KIALVGKYVE…VRASITNKES (243 aa). Glycine 354 serves as a coordination point for L-glutamine. Cysteine 381 (nucleophile; for glutamine hydrolysis) is an active-site residue. L-glutamine-binding positions include 382–385, glutamate 405, and arginine 462; that span reads LGMQ. Catalysis depends on residues histidine 507 and glutamate 509.

It belongs to the CTP synthase family. As to quaternary structure, homotetramer.

The catalysed reaction is UTP + L-glutamine + ATP + H2O = CTP + L-glutamate + ADP + phosphate + 2 H(+). The enzyme catalyses L-glutamine + H2O = L-glutamate + NH4(+). It catalyses the reaction UTP + NH4(+) + ATP = CTP + ADP + phosphate + 2 H(+). It participates in pyrimidine metabolism; CTP biosynthesis via de novo pathway; CTP from UDP: step 2/2. Its activity is regulated as follows. Allosterically activated by GTP, when glutamine is the substrate; GTP has no effect on the reaction when ammonia is the substrate. The allosteric effector GTP functions by stabilizing the protein conformation that binds the tetrahedral intermediate(s) formed during glutamine hydrolysis. Inhibited by the product CTP, via allosteric rather than competitive inhibition. Functionally, catalyzes the ATP-dependent amination of UTP to CTP with either L-glutamine or ammonia as the source of nitrogen. Regulates intracellular CTP levels through interactions with the four ribonucleotide triphosphates. This chain is CTP synthase, found in Bacillus cereus (strain AH820).